Consider the following 287-residue polypeptide: Melatonin receptor type 1B-A (287 aa).

Residues 1 to 28 (MPENVSLIRNRTEVGQGRAWGSGAGARP) are Extracellular-facing. N-linked (GlcNAc...) asparagine glycans are attached at residues Asn-4 and Asn-10. The chain crosses the membrane as a helical span at residues 29-49 (AWVVMVLAGVLIFTSVVDVLG). Residues 50-69 (NVLVIISVLRNRKLRNAGNA) lie on the Cytoplasmic side of the membrane. Residues 70-90 (FVVSLAFADLLVVCYPYPLVL) traverse the membrane as a helical segment. The Extracellular portion of the chain corresponds to 91-107 (HAMLHAGWLPGEMECKV). A disulfide bridge links Cys-105 with Cys-182. The chain crosses the membrane as a helical span at residues 108–128 (SGFLMGASVIGSIFNITAIAI). Topologically, residues 129-149 (NRYCFICQANTYEKIYGRAGT) are cytoplasmic. The chain crosses the membrane as a helical span at residues 150 to 170 (LVLLTLVWVLTAIAILPNLSL). The Extracellular segment spans residues 171–192 (GSLTYDPRVYSCTFSQTTSAGY). The helical transmembrane segment at 193-213 (TIAVVTVHFLLPIAVVTFCYL) threads the bilayer. At 214 to 245 (RIWVLVLRVRRRVTTDVRPRLRPSELRHFLTM) the chain is on the cytoplasmic side. A helical transmembrane segment spans residues 246-266 (FVVFVLFAVCWAPLNLIGLAV). Residues 267–275 (AVDPPRVGP) are Extracellular-facing. Residues 276–287 (LVPDWLFVMSYF) form a helical membrane-spanning segment.

The protein belongs to the G-protein coupled receptor 1 family.

The protein resides in the cell membrane. High affinity receptor for melatonin. The activity of this receptor is mediated by pertussis toxin sensitive G proteins that inhibits adenylate cyclase activity. This chain is Melatonin receptor type 1B-A (mtnr1ba), found in Danio rerio (Zebrafish).